The chain runs to 360 residues: Phospho-N-acetylmuramoyl-pentapeptide-transferase (360 aa).

Transmembrane regions (helical) follow at residues 27–47 (ILSVLTALFIAFWVGPIMIRM), 73–93 (TMGGALILVAIVISTLLWGDL), 97–117 (FVWITLGVLFVFGAVGWVDDW), 132–152 (WKYLWLSVGALGAGCALFFTA), 164–184 (FFKSVAINMGWFYIVLTYFVI), 199–219 (GLAIMPTVLVGGALGIFAYAG), 236–256 (AGELVIISAALCGAGLGFLWF), 263–283 (VFMGDVGALSLGAVLGVMAVI), 288–308 (IVLFIMGGVFVMETVSVMLQV), and 337–357 (KIIVRFWIITVILVLVGLATL).

The protein belongs to the glycosyltransferase 4 family. MraY subfamily. Mg(2+) serves as cofactor.

The protein resides in the cell inner membrane. The enzyme catalyses UDP-N-acetyl-alpha-D-muramoyl-L-alanyl-gamma-D-glutamyl-meso-2,6-diaminopimeloyl-D-alanyl-D-alanine + di-trans,octa-cis-undecaprenyl phosphate = di-trans,octa-cis-undecaprenyl diphospho-N-acetyl-alpha-D-muramoyl-L-alanyl-D-glutamyl-meso-2,6-diaminopimeloyl-D-alanyl-D-alanine + UMP. The protein operates within cell wall biogenesis; peptidoglycan biosynthesis. Catalyzes the initial step of the lipid cycle reactions in the biosynthesis of the cell wall peptidoglycan: transfers peptidoglycan precursor phospho-MurNAc-pentapeptide from UDP-MurNAc-pentapeptide onto the lipid carrier undecaprenyl phosphate, yielding undecaprenyl-pyrophosphoryl-MurNAc-pentapeptide, known as lipid I. This Alcanivorax borkumensis (strain ATCC 700651 / DSM 11573 / NCIMB 13689 / SK2) protein is Phospho-N-acetylmuramoyl-pentapeptide-transferase.